A 165-amino-acid polypeptide reads, in one-letter code: Bark lectin isoform 1 (165 aa).

N-linked (GlcNAc...) asparagine glycans are attached at residues Asn27 and Asn57. 2 disulfides stabilise this stretch: Cys33–Cys80 and Cys126–Cys133.

Belongs to the protease inhibitor I3 (leguminous Kunitz-type inhibitor) family. As to quaternary structure, dimer.

In terms of biological role, glucose and N-acetylglucosamine binding lectin. Has hemagglutinating activity against human and rabbit erythrocytes which does not require divalent cations. Inhibits factor Xa and, to a lesser extent, trypsin. Does not inhibit neutrophil elastase, human plasma kallikrein, papain, human plasmin, porcine pancreatic kallikrein and bovin chymotrypsin. Has insecticidal activity against the termite species N.corniger. Induces apoptosis in prostrate cancer cell lines DU145 and PC3. This Crateva tapia (Garlic-pear tree) protein is Bark lectin isoform 1.